The primary structure comprises 142 residues: Glycine-rich RNA-binding protein 1 (142 aa).

The region spanning 1–65 (NSLHSAFSTY…RNITVNEAQS (65 aa)) is the RRM domain. A disordered region spans residues 48–101 (MNGKELDGRNITVNEAQSRGGRGGGGGGGYGGGRGGGGGYGRRDGGGGGYGGGG). Over residues 67 to 101 (GGRGGGGGGGYGGGRGGGGGYGRRDGGGGGYGGGG) the composition is skewed to gly residues.

Its function is as follows. Possibly has a role in RNA transcription or processing during stress. This Sorghum bicolor (Sorghum) protein is Glycine-rich RNA-binding protein 1 (GRP1).